The sequence spans 198 residues: NAD(P)H dehydrogenase (quinone) (198 aa).

Positions 4–189 (VLVLYYSMYG…SIARYQGEYV (186 aa)) constitute a Flavodoxin-like domain. FMN contacts are provided by residues 10–15 (SMYGHI) and 78–80 (TRF). Tyr12 provides a ligand contact to NAD(+). Trp98 provides a ligand contact to substrate. FMN contacts are provided by residues 113-118 (STGTGG) and His133.

It belongs to the WrbA family. The cofactor is FMN.

The catalysed reaction is a quinone + NADH + H(+) = a quinol + NAD(+). It catalyses the reaction a quinone + NADPH + H(+) = a quinol + NADP(+). This Escherichia coli (strain SE11) protein is NAD(P)H dehydrogenase (quinone).